The sequence spans 170 residues: Regulator of ribonuclease activity A (170 aa).

The protein belongs to the RraA family. As to quaternary structure, homotrimer. Binds to both RNA-binding sites in the C-terminal region of Rne and to RhlB.

It localises to the cytoplasm. Functionally, globally modulates RNA abundance by binding to RNase E (Rne) and regulating its endonucleolytic activity. Can modulate Rne action in a substrate-dependent manner by altering the composition of the degradosome. Modulates RNA-binding and helicase activities of the degradosome. This Psychromonas ingrahamii (strain DSM 17664 / CCUG 51855 / 37) protein is Regulator of ribonuclease activity A.